A 457-amino-acid chain; its full sequence is 3-isopropylmalate dehydratase large subunit (457 aa).

[4Fe-4S] cluster is bound by residues cysteine 337, cysteine 397, and cysteine 400.

The protein belongs to the aconitase/IPM isomerase family. LeuC type 1 subfamily. As to quaternary structure, heterodimer of LeuC and LeuD. It depends on [4Fe-4S] cluster as a cofactor.

It catalyses the reaction (2R,3S)-3-isopropylmalate = (2S)-2-isopropylmalate. Its pathway is amino-acid biosynthesis; L-leucine biosynthesis; L-leucine from 3-methyl-2-oxobutanoate: step 2/4. Catalyzes the isomerization between 2-isopropylmalate and 3-isopropylmalate, via the formation of 2-isopropylmaleate. The sequence is that of 3-isopropylmalate dehydratase large subunit from Oenococcus oeni (strain ATCC BAA-331 / PSU-1).